A 225-amino-acid chain; its full sequence is Testis-expressed protein 30 (225 aa).

This is Testis-expressed protein 30 (Tex30) from Mus musculus (Mouse).